Reading from the N-terminus, the 325-residue chain is Aldo-keto reductase family 1 member A1 (325 aa).

Ala2 carries the post-translational modification N-acetylalanine. Phosphoserine is present on Ser4. NADP(+) is bound by residues 11 to 20 (GQKMPLIGLG), Thr21, and Trp22. A Phosphoserine modification is found at Ser38. Asp45 contacts NADP(+). Tyr50 functions as the Proton donor in the catalytic mechanism. Lys127 is modified (N6-acetyllysine; alternate). The residue at position 127 (Lys127) is an N6-succinyllysine; alternate. The NADP(+) site is built by Ser162, Asn163, Ser211, Leu213, Ser215, Ser216, Lys263, Ser264, Val265, Thr266, Arg269, and Asn273. Phosphoserine is present on Ser211.

This sequence belongs to the aldo/keto reductase family. In terms of assembly, monomer.

The protein localises to the cytoplasm. The protein resides in the cytosol. Its subcellular location is the apical cell membrane. The enzyme catalyses a primary alcohol + NADP(+) = an aldehyde + NADPH + H(+). The catalysed reaction is L-gulonate + NADP(+) = aldehydo-D-glucuronate + NADPH + H(+). It carries out the reaction L-gulono-1,4-lactone + NADP(+) = D-glucurono-3,6-lactone + NADPH + H(+). It catalyses the reaction allyl alcohol + NADP(+) = acrolein + NADPH + H(+). The enzyme catalyses glycerol + NADP(+) = D-glyceraldehyde + NADPH + H(+). The catalysed reaction is glycerol + NADP(+) = L-glyceraldehyde + NADPH + H(+). It carries out the reaction hydroxyacetone + NADP(+) = methylglyoxal + NADPH + H(+). It catalyses the reaction 3-deoxyfructose + NADP(+) = 3-deoxyglucosone + NADPH + H(+). The enzyme catalyses (R)-mevalonate + NADP(+) = (R)-mevaldate + NADPH + H(+). The catalysed reaction is pyridine 3-methanol + NADP(+) = pyridine-3-carbaldehyde + NADPH + H(+). It carries out the reaction S-nitroso-CoA + NADPH + H(+) = sulfinamide-CoA + NADP(+). It catalyses the reaction S-nitrosoglutathione + NADPH + H(+) = S-(hydroxysulfenamide)glutathione + NADP(+). Catalyzes the NADPH-dependent reduction of a wide variety of carbonyl-containing compounds to their corresponding alcohols. Displays enzymatic activity towards endogenous metabolites such as aromatic and aliphatic aldehydes, ketones, monosaccharides and bile acids, with a preference for negatively charged substrates, such as glucuronate and succinic semialdehyde. Plays an important role in ascorbic acid biosynthesis by catalyzing the reduction of D-glucuronic acid and D-glucurono-gamma-lactone. Functions as a detoxifiying enzyme by reducing a range of toxic aldehydes. Reduces methylglyoxal and 3-deoxyglucosone, which are present at elevated levels under hyperglycemic conditions and are cytotoxic. Involved also in the detoxification of lipid-derived aldehydes like acrolein. Plays a role in the activation of procarcinogens, such as polycyclic aromatic hydrocarbon trans-dihydrodiols, and in the metabolism of various xenobiotics and drugs. Also acts as an inhibitor of protein S-nitrosylation by mediating degradation of S-nitroso-coenzyme A (S-nitroso-CoA), a cofactor required to S-nitrosylate proteins. S-nitroso-CoA reductase activity is involved in reprogramming intermediary metabolism in renal proximal tubules, notably by inhibiting protein S-nitrosylation of isoform 2 of PKM (PKM2). Also acts as a S-nitroso-glutathione reductase by catalyzing the NADPH-dependent reduction of S-nitrosoglutathione. Displays no reductase activity towards retinoids. This is Aldo-keto reductase family 1 member A1 from Bos taurus (Bovine).